We begin with the raw amino-acid sequence, 467 residues long: Probable protein phosphatase 2C 55 (467 aa).

Residues serine 222 to valine 458 form the PPM-type phosphatase domain. Residues aspartate 252, glycine 253, aspartate 383, and aspartate 449 each coordinate Mn(2+).

The protein belongs to the PP2C family. The cofactor is Mg(2+). Mn(2+) serves as cofactor.

The catalysed reaction is O-phospho-L-seryl-[protein] + H2O = L-seryl-[protein] + phosphate. The enzyme catalyses O-phospho-L-threonyl-[protein] + H2O = L-threonyl-[protein] + phosphate. The chain is Probable protein phosphatase 2C 55 from Arabidopsis thaliana (Mouse-ear cress).